A 374-amino-acid chain; its full sequence is All-trans-retinol dehydrogenase [NAD(+)] ADH7 (374 aa).

Met1 carries the N-acetylmethionine modification. The Zn(2+) site is built by Cys47, His68, Cys98, Cys101, Cys104, Cys112, and Cys174. Residues 199–204, Asp223, Lys228, 292–294, and Arg369 each bind NAD(+); these read GLGGVG and VGA.

It belongs to the zinc-containing alcohol dehydrogenase family. Class-IV subfamily. Homodimer. It depends on Zn(2+) as a cofactor. As to expression, preferentially expressed in stomach.

The protein resides in the cytoplasm. The catalysed reaction is a primary alcohol + NAD(+) = an aldehyde + NADH + H(+). The enzyme catalyses 10-hydroxydecanoate + NAD(+) = 10-oxodecanoate + NADH + H(+). It carries out the reaction all-trans-retinol + NAD(+) = all-trans-retinal + NADH + H(+). It catalyses the reaction 9-cis-retinol + NAD(+) = 9-cis-retinal + NADH + H(+). The catalysed reaction is all-trans-3,4-didehydroretinol + NAD(+) = all-trans-3,4-didehydroretinal + NADH + H(+). The enzyme catalyses all-trans-4-hydroxyretinol + NAD(+) = all-trans-4-hydroxyretinal + NADH + H(+). It carries out the reaction all-trans-4-oxoretinol + NAD(+) = all-trans-4-oxoretinal + NADH + H(+). It catalyses the reaction 12-hydroxydodecanoate + NAD(+) = 12-oxododecanoate + NADH + H(+). The catalysed reaction is 16-hydroxyhexadecanoate + NAD(+) = 16-oxohexadecanoate + NADH + H(+). The enzyme catalyses hexan-1-ol + NAD(+) = hexanal + NADH + H(+). It carries out the reaction (E)-hex-2-en-1-ol + NAD(+) = (E)-hex-2-enal + NADH + H(+). It catalyses the reaction (E)-4-hydroxynon-2-en-1-ol + NAD(+) = (E)-4-hydroxynon-2-enal + NADH + H(+). Retinol oxidation is inhibited by the detergent Tween 80. Ethanol inhibits both all-trans-retinol and 9-cis-retinol oxidation. 13-cis-retinol is an effective competitive inhibitor of the 9-cis-retinol oxidation. All-trans-retinoic acid is a powerful inhibitor of all-trans-retinol oxidation. 13-cis-retinoic acid is a powerful inhibitor of all-trans-retinol oxidation. Cimetidine and ranitidine inhibited ethanol oxidation. Functionally, catalyzes the NAD-dependent oxidation of all-trans-retinol, alcohol, aldehyde and omega-hydroxy fatty acids and their derivatives. Oxidizes preferentially all trans-retinol, all-trans-4-hydroxyretinol, 9-cis-retinol, 2-hexenol, and long chain omega-hydroxy fatty acids such as juniperic acid. In vitro can also catalyze the NADH-dependent reduction of all-trans-retinal and aldehydes and their derivatives. Reduces preferentially all trans-retinal, all-trans-4-oxoretinal and hexanal. Catalyzes in the oxidative direction with higher efficiency. Therefore may participate in retinoid metabolism, fatty acid omega-oxidation, and elimination of cytotoxic aldehydes produced by lipid peroxidation. The protein is All-trans-retinol dehydrogenase [NAD(+)] ADH7 (Adh7) of Rattus norvegicus (Rat).